A 1613-amino-acid polypeptide reads, in one-letter code: Myosin-IIIa (1613 aa).

Residues 21–287 (WEIIETIGKG…VSDLLKHKFI (267 aa)) form the Protein kinase domain. ATP is bound by residues 27-35 (IGKGTYGKV) and K50. D150 serves as the catalytic Proton acceptor. Positions 338–1052 (KDVDDLATLD…HVEQLNLMRK (715 aa)) constitute a Myosin motor domain. Positions 933-955 (LMDLLSKMVVGQPHFVRCIKPNN) are actin-binding. IQ domains lie at 1054–1083 (ATNK…KRKS) and 1081–1110 (RKSS…MKNT). Disordered regions lie at residues 1136 to 1168 (VKKQ…TAPF) and 1476 to 1506 (SGVS…EDST). Over residues 1145–1161 (PTNESNTSTPNNKESPS) the composition is skewed to low complexity. Positions 1398–1476 (EGVHHSKMVD…RHVSTHQYLS (79 aa)) are interaction with MORN4. The segment covering 1488-1497 (RPPRRPRKPK) has biased composition (basic residues).

The protein in the C-terminal section; belongs to the TRAFAC class myosin-kinesin ATPase superfamily. Myosin family. This sequence in the N-terminal section; belongs to the protein kinase superfamily. STE Ser/Thr protein kinase family. As to quaternary structure, interacts with MORN4. Interacts (via C-terminus) with ESPN and ESPNL. As to expression, expressed in the cochlear hair cells (at protein level). Expressed in utricle hair bundles (at protein level).

Its subcellular location is the cytoplasm. It is found in the cytoskeleton. It localises to the cell projection. The protein resides in the filopodium tip. The protein localises to the stereocilium. It catalyses the reaction L-seryl-[protein] + ATP = O-phospho-L-seryl-[protein] + ADP + H(+). It carries out the reaction L-threonyl-[protein] + ATP = O-phospho-L-threonyl-[protein] + ADP + H(+). The catalysed reaction is ATP + H2O = ADP + phosphate + H(+). Functionally, actin-dependent motor protein with a protein kinase activity, playing an essential role in hearing. Probably plays also a role in vision. Required for normal cochlear hair bundle development and hearing. Plays an important role in the early steps of cochlear hair bundle morphogenesis. Influences the number and lengths of stereocilia to be produced and limits the growth of microvilli within the forming auditory hair bundles thereby contributing to the architecture of the hair bundle, including its staircase pattern. Involved in the elongation of actin in stereocilia tips by transporting the actin regulatory factor ESPN to the plus ends of actin filaments. The sequence is that of Myosin-IIIa (Myo3a) from Mus musculus (Mouse).